Here is a 341-residue protein sequence, read N- to C-terminus: Phosphoribosylformylglycinamidine cyclo-ligase (341 aa).

It belongs to the AIR synthase family.

It localises to the cytoplasm. It carries out the reaction 2-formamido-N(1)-(5-O-phospho-beta-D-ribosyl)acetamidine + ATP = 5-amino-1-(5-phospho-beta-D-ribosyl)imidazole + ADP + phosphate + H(+). The protein operates within purine metabolism; IMP biosynthesis via de novo pathway; 5-amino-1-(5-phospho-D-ribosyl)imidazole from N(2)-formyl-N(1)-(5-phospho-D-ribosyl)glycinamide: step 2/2. This Lachnospira eligens (strain ATCC 27750 / DSM 3376 / VPI C15-48 / C15-B4) (Eubacterium eligens) protein is Phosphoribosylformylglycinamidine cyclo-ligase.